A 77-amino-acid polypeptide reads, in one-letter code: U8-lycotoxin-Ls1m (77 aa).

An N-terminal signal peptide occupies residues 1–20; sequence MKLMIFTGLVLFAIVSLIEA. Residues 21-26 constitute a propeptide that is removed on maturation; the sequence is QAENEK.

This sequence belongs to the neurotoxin 19 (CSTX) family. 08 (U8-Lctx) subfamily. Post-translationally, contains 4 disulfide bonds. In terms of tissue distribution, expressed by the venom gland.

The protein localises to the secreted. This chain is U8-lycotoxin-Ls1m, found in Lycosa singoriensis (Wolf spider).